Here is a 205-residue protein sequence, read N- to C-terminus: Imidazole glycerol phosphate synthase subunit HisH (205 aa).

The 205-residue stretch at 1–205 (MVGIVNYNIG…RILKNFCEIG (205 aa)) folds into the Glutamine amidotransferase type-1 domain. C79 acts as the Nucleophile in catalysis. Active-site residues include H186 and E188.

As to quaternary structure, heterodimer of HisH and HisF.

The protein localises to the cytoplasm. The catalysed reaction is 5-[(5-phospho-1-deoxy-D-ribulos-1-ylimino)methylamino]-1-(5-phospho-beta-D-ribosyl)imidazole-4-carboxamide + L-glutamine = D-erythro-1-(imidazol-4-yl)glycerol 3-phosphate + 5-amino-1-(5-phospho-beta-D-ribosyl)imidazole-4-carboxamide + L-glutamate + H(+). It carries out the reaction L-glutamine + H2O = L-glutamate + NH4(+). It participates in amino-acid biosynthesis; L-histidine biosynthesis; L-histidine from 5-phospho-alpha-D-ribose 1-diphosphate: step 5/9. In terms of biological role, IGPS catalyzes the conversion of PRFAR and glutamine to IGP, AICAR and glutamate. The HisH subunit catalyzes the hydrolysis of glutamine to glutamate and ammonia as part of the synthesis of IGP and AICAR. The resulting ammonia molecule is channeled to the active site of HisF. The protein is Imidazole glycerol phosphate synthase subunit HisH of Wolinella succinogenes (strain ATCC 29543 / DSM 1740 / CCUG 13145 / JCM 31913 / LMG 7466 / NCTC 11488 / FDC 602W) (Vibrio succinogenes).